A 308-amino-acid polypeptide reads, in one-letter code: Taste receptor type 2 member 43 (308 aa).

Position 1 (Met-1) is a topological domain, extracellular. Residues 2–22 traverse the membrane as a helical segment; sequence ITFLPIIFSILVVVTFVIGNC. Residues 23–46 are Cytoplasmic-facing; sequence ANGFIALVNSTEWVKRQKISFADQ. Residues 47 to 67 traverse the membrane as a helical segment; the sequence is ILTALAVSRVGLLWVLLLNWY. Residues 68–86 lie on the Extracellular side of the membrane; that stretch reads ATVLNPAFYSVEVRTIVYN. The helical transmembrane segment at 87 to 107 threads the bilayer; the sequence is LWAVINHFSNWLATSLSIFYL. At 108 to 126 the chain is on the cytoplasmic side; it reads LKIANFSNLIFLHLKRRVK. A helical membrane pass occupies residues 127–147; sequence SVVLVILLGPLLFLVCHLFVV. The Extracellular portion of the chain corresponds to 148–178; it reads NMNEIVRTKEYEGNMTWKSKLRSAMYLSNTT. 2 N-linked (GlcNAc...) asparagine glycosylation sites follow: Asn-161 and Asn-176. A helical membrane pass occupies residues 179-199; it reads VTILANLVPFILTLISFLLLI. At 200–229 the chain is on the cytoplasmic side; it reads CSLCKHLKKMQLRDKGSQDPSTKVHIKALQ. Residues 230-249 form a helical membrane-spanning segment; it reads TVISLLLCVIYFLSIMISSW. Over 250-258 the chain is Extracellular; that stretch reads SLGRVENKA. A helical transmembrane segment spans residues 259 to 279; the sequence is VFMFCKAIRFSYPSAHAFILI. At 280–308 the chain is on the cytoplasmic side; the sequence is WGNKKLKQTLLSVLWNVRYCVKGQKLPSP.

Belongs to the G-protein coupled receptor T2R family.

The protein resides in the membrane. Its subcellular location is the cell projection. The protein localises to the cilium membrane. Functionally, gustducin-coupled receptor immplicated in the perception of bitter compounds in the oral cavity and the gastrointestinal tract. Signals through PLCB2 and the calcium-regulated cation channel TRPM5. Activated by the sulfonyl amide sweeteners saccharin and acesulfame K. In airway epithelial cells, binding of bitter compounds increases the intracellular calcium ion concentration and stimulates ciliary beat frequency. May act as chemosensory receptors in airway epithelial cells to detect and eliminate potential noxious agents from the airways. In Papio hamadryas (Hamadryas baboon), this protein is Taste receptor type 2 member 43 (TAS2R43).